The primary structure comprises 86 residues: Large ribosomal subunit protein bL27 (86 aa).

The disordered stretch occupies residues 1–21; that stretch reads MAHKKAAGSSRNGRDSESKRL.

Belongs to the bacterial ribosomal protein bL27 family.

In Hahella chejuensis (strain KCTC 2396), this protein is Large ribosomal subunit protein bL27.